The following is a 97-amino-acid chain: U-reduvitoxin-Pr10a (97 aa).

The first 18 residues, Met1–Gly18, serve as a signal peptide directing secretion. Pacifastin domains are found at residues Lys22–Arg59 and Lys62–Trp97. Disulfide bonds link Cys24–Cys42, Cys37–Cys56, and Cys40–Cys51. A pro-Pro-Arg motif necessary for proteolytic processing region spans residues Pro57 to Arg59. Disulfide bonds link Cys65-Cys82, Cys77-Cys96, and Cys80-Cys91.

It belongs to the protease inhibitor I19 family. As to expression, expressed by the venom gland.

The protein localises to the secreted. Its function is as follows. Inhibits trypsin activity and prophenoloxidase (PPO) activation, an enzyme essential for both clotting and insect innate immune responses. It does not inhibit activity of chymotrypsin and protease K, and has no effect on phenoloxidase (PO) activity. This Platymeris rhadamanthus (Red spot assassin bug) protein is U-reduvitoxin-Pr10a.